The primary structure comprises 447 residues: Exodeoxyribonuclease 7 large subunit (447 aa).

It belongs to the XseA family. In terms of assembly, heterooligomer composed of large and small subunits.

The protein resides in the cytoplasm. The catalysed reaction is Exonucleolytic cleavage in either 5'- to 3'- or 3'- to 5'-direction to yield nucleoside 5'-phosphates.. In terms of biological role, bidirectionally degrades single-stranded DNA into large acid-insoluble oligonucleotides, which are then degraded further into small acid-soluble oligonucleotides. The protein is Exodeoxyribonuclease 7 large subunit of Lactobacillus helveticus (strain DPC 4571).